A 324-amino-acid chain; its full sequence is CYFIP-related Rac1 interactor B (324 aa).

A lipid anchor (N-myristoyl glycine) is attached at Gly2. Lys74 is covalently cross-linked (Glycyl lysine isopeptide (Lys-Gly) (interchain with G-Cter in ubiquitin)).

This sequence belongs to the CYRI family. Interacts with RAC1 (GTP-bound form preferentially). Post-translationally, ubiquitinated at Lys-74 upon Salmonella bacterial infection. As to expression, expressed in pancreatic ducts (at protein level).

It is found in the membrane. Its subcellular location is the mitochondrion. Its function is as follows. Negatively regulates RAC1 signaling and RAC1-driven cytoskeletal remodeling. Regulates chemotaxis, cell migration and epithelial polarization by controlling the polarity, plasticity, duration and extent of protrusions. Limits Rac1 mediated activation of the Scar/WAVE complex, focuses protrusion signals and regulates pseudopod complexity by inhibiting Scar/WAVE-induced actin polymerization. Protects against Salmonella bacterial infection. Attenuates processes such as macropinocytosis, phagocytosis and cell migration and restrict sopE-mediated bacterial entry. Also restricts infection mediated by Mycobacterium tuberculosis and Listeria monocytogenes. Involved in the regulation of mitochondrial dynamics and oxidative stress. This chain is CYFIP-related Rac1 interactor B (Cyrib), found in Mus musculus (Mouse).